We begin with the raw amino-acid sequence, 950 residues long: Translation initiation factor IF-2 (950 aa).

4 stretches are compositionally biased toward basic and acidic residues: residues 128-156, 165-186, 200-234, and 291-312; these read KPKV…KVEA, AEVK…EKKK, KRAE…DNRR, and NRRD…DGNR. The interval 128–352 is disordered; sequence KPKVAEPVKK…YQNNQSSNVP (225 aa). Polar residues-rich tracts occupy residues 322–336 and 343–352; these read NRNQ…NWNQ and YQNNQSSNVP. Residues 448–619 form the tr-type G domain; the sequence is ERPAVVTIMG…LLVAEVQELK (172 aa). The segment at 457–464 is G1; sequence GHVDHGKT. 457–464 is a binding site for GTP; it reads GHVDHGKT. A G2 region spans residues 482–486; it reads GITQH. A G3 region spans residues 503-506; it reads DTPG. GTP is bound by residues 503 to 507 and 557 to 560; these read DTPGH and NKLD. The interval 557–560 is G4; that stretch reads NKLD. Residues 595–597 are G5; it reads SAK.

This sequence belongs to the TRAFAC class translation factor GTPase superfamily. Classic translation factor GTPase family. IF-2 subfamily.

It is found in the cytoplasm. Its function is as follows. One of the essential components for the initiation of protein synthesis. Protects formylmethionyl-tRNA from spontaneous hydrolysis and promotes its binding to the 30S ribosomal subunits. Also involved in the hydrolysis of GTP during the formation of the 70S ribosomal complex. The polypeptide is Translation initiation factor IF-2 (infB) (Lactococcus lactis subsp. cremoris (Streptococcus cremoris)).